The primary structure comprises 427 residues: MNQGTIIKVVGPVVDVEFPSGLLPNINNALHISSDEQPEDKKTGHDFKVVLEVAEHLGGNIVRAIAMSSTDGLMRGMVVTDQESPITVPVGDATLGRLMNVVGDPIDEAGEVPSETRWPIHRSAPTYVQQNPSKEILETGIKVVDLLCPYVKGGKIGLFGGAGVGKTVLIQELIRNIAYEHGGYSVFAGVGERTREGKDLLVEMRESGVIDKTSLVFGQMNEPPGARMRIALTGLTVAEYFRDEQNQDVLLFIDNIFRFTQAGSEVSALLGRMPSAVGYQPTLATEMGTMQERITSTDKGSITSVQAVYVPADDLTDPAPATTFAHLDATTVLERSISEKGIYPAVDPLASTSRILDPRIVGEEHYEIARDVQEVLQEYRELQDIISILGMDELSDEEKLTVARARRIERFLSQSFFVAEQFTGNPG.

Position 160–167 (Gly160–Thr167) interacts with ATP.

It belongs to the ATPase alpha/beta chains family. In terms of assembly, F-type ATPases have 2 components, CF(1) - the catalytic core - and CF(0) - the membrane proton channel. CF(1) has five subunits: alpha(3), beta(3), gamma(1), delta(1), epsilon(1). CF(0) has three main subunits: a(1), b(2) and c(9-12). The alpha and beta chains form an alternating ring which encloses part of the gamma chain. CF(1) is attached to CF(0) by a central stalk formed by the gamma and epsilon chains, while a peripheral stalk is formed by the delta and b chains.

Its subcellular location is the cell membrane. The catalysed reaction is ATP + H2O + 4 H(+)(in) = ADP + phosphate + 5 H(+)(out). Functionally, produces ATP from ADP in the presence of a proton gradient across the membrane. The catalytic sites are hosted primarily by the beta subunits. In Peptococcus niger, this protein is ATP synthase subunit beta.